Consider the following 128-residue polypeptide: Large ribosomal subunit protein bL17 (128 aa).

The protein belongs to the bacterial ribosomal protein bL17 family. As to quaternary structure, part of the 50S ribosomal subunit. Contacts protein L32.

This chain is Large ribosomal subunit protein bL17, found in Pseudomonas fluorescens (strain ATCC BAA-477 / NRRL B-23932 / Pf-5).